The primary structure comprises 121 residues: Insertion element IS406 uncharacterized 13.3 kDa protein (121 aa).

This chain is Insertion element IS406 uncharacterized 13.3 kDa protein, found in Burkholderia multivorans (strain ATCC 17616 / 249).